A 348-amino-acid chain; its full sequence is MRKNILDFSYEELVDEFSKIGLEKFRVDQVWDWIYKKHEFDFDKMTNLSKEHRNTLSERFYIYVPELLDMQISQIDKTTKFLWKLEDDNTIESVLLFHPDRVTACISTQVGCPAKCAFCATGQSGFVRNLSAGEIVSQIIAMEKHRKVNIGNIVYMGMGEPLLNYKEVVKSVKMLNHKKGKNISMRRISISTVGIPEKIVELAQDLPEVKLAISLHAPNNYKRDIIVPMNKKYSVEEIIQSAKEYQKITKNRVTFEYILIREFNDFVDDAEKLAELLKGMGAYVNLIPVNPVPSSGELKFERPHHWAIERFKEVLDKHNIENEIRREKGTDIDAACGQLRRRYITNKK.

The active-site Proton acceptor is Glu-92. In terms of domain architecture, Radical SAM core spans 98-331 (HPDRVTACIS…NEIRREKGTD (234 aa)). An intrachain disulfide couples Cys-105 to Cys-336. The [4Fe-4S] cluster site is built by Cys-112, Cys-116, and Cys-119. S-adenosyl-L-methionine-binding positions include 159 to 160 (GE), Ser-191, 214 to 216 (SLH), and Asn-290. Cys-336 acts as the S-methylcysteine intermediate in catalysis.

This sequence belongs to the radical SAM superfamily. RlmN family. [4Fe-4S] cluster is required as a cofactor.

It is found in the cytoplasm. The enzyme catalyses adenosine(2503) in 23S rRNA + 2 reduced [2Fe-2S]-[ferredoxin] + 2 S-adenosyl-L-methionine = 2-methyladenosine(2503) in 23S rRNA + 5'-deoxyadenosine + L-methionine + 2 oxidized [2Fe-2S]-[ferredoxin] + S-adenosyl-L-homocysteine. It carries out the reaction adenosine(37) in tRNA + 2 reduced [2Fe-2S]-[ferredoxin] + 2 S-adenosyl-L-methionine = 2-methyladenosine(37) in tRNA + 5'-deoxyadenosine + L-methionine + 2 oxidized [2Fe-2S]-[ferredoxin] + S-adenosyl-L-homocysteine. Specifically methylates position 2 of adenine 2503 in 23S rRNA and position 2 of adenine 37 in tRNAs. This is Probable dual-specificity RNA methyltransferase RlmN from Fervidobacterium nodosum (strain ATCC 35602 / DSM 5306 / Rt17-B1).